The following is a 396-amino-acid chain: Elongation factor Tu (396 aa).

Positions Lys-10 to Gln-206 constitute a tr-type G domain. The tract at residues Gly-19–Thr-26 is G1. Gly-19 to Thr-26 is a binding site for GTP. Thr-26 provides a ligand contact to Mg(2+). A G2 region spans residues Gly-60 to Ala-64. Residues Asp-81–Gly-84 form a G3 region. Residues Asp-81–His-85 and Asn-136–Asp-139 each bind GTP. The interval Asn-136–Asp-139 is G4. A G5 region spans residues Ser-174–Leu-176.

This sequence belongs to the TRAFAC class translation factor GTPase superfamily. Classic translation factor GTPase family. EF-Tu/EF-1A subfamily. Monomer.

Its subcellular location is the cytoplasm. The catalysed reaction is GTP + H2O = GDP + phosphate + H(+). In terms of biological role, GTP hydrolase that promotes the GTP-dependent binding of aminoacyl-tRNA to the A-site of ribosomes during protein biosynthesis. The chain is Elongation factor Tu from Nitrosococcus oceani (strain ATCC 19707 / BCRC 17464 / JCM 30415 / NCIMB 11848 / C-107).